Here is a 313-residue protein sequence, read N- to C-terminus: Curved DNA-binding protein (313 aa).

One can recognise a J domain in the interval 5–69 (DYYKILGVSR…EKRKAYDAIG (65 aa)). The segment at 71 to 93 (GWKQGQGFTPPPGWESRPGGEGV) is disordered.

Its subcellular location is the cytoplasm. It localises to the nucleoid. In terms of biological role, DNA-binding protein that preferentially recognizes a curved DNA sequence. It is probably a functional analog of DnaJ; displays overlapping activities with DnaJ, but functions under different conditions, probably acting as a molecular chaperone in an adaptive response to environmental stresses other than heat shock. Lacks autonomous chaperone activity; binds native substrates and targets them for recognition by DnaK. Its activity is inhibited by the binding of CbpM. The sequence is that of Curved DNA-binding protein from Coxiella burnetii (strain Dugway 5J108-111).